The following is a 121-amino-acid chain: Large ribosomal subunit protein uL18 (121 aa).

Belongs to the universal ribosomal protein uL18 family. In terms of assembly, part of the 50S ribosomal subunit; part of the 5S rRNA/L5/L18/L25 subcomplex. Contacts the 5S and 23S rRNAs.

In terms of biological role, this is one of the proteins that bind and probably mediate the attachment of the 5S RNA into the large ribosomal subunit, where it forms part of the central protuberance. In Paraburkholderia phytofirmans (strain DSM 17436 / LMG 22146 / PsJN) (Burkholderia phytofirmans), this protein is Large ribosomal subunit protein uL18.